The chain runs to 366 residues: Inhibin alpha chain (366 aa).

The first 20 residues, 1–20 (MVSQRSLLLLLLLTLRDVDS), serve as a signal peptide directing secretion. Positions 21–63 (CQGPELVRELVLAKVKALFLDALGPPAMDGEGGDPGIRRLPRR) are excised as a propeptide. Residues 64-233 (HAVGGFMHRT…APSAGERARR (170 aa)) constitute a propeptide, inhibin alpha N-terminal region. 2 N-linked (GlcNAc...) asparagine glycosylation sites follow: asparagine 147 and asparagine 269. Disulfide bonds link cysteine 263-cysteine 328, cysteine 292-cysteine 363, and cysteine 296-cysteine 365.

This sequence belongs to the TGF-beta family. Dimeric, linked by one or more disulfide bonds. Activin B is a dimer of alpha and beta-B. Inhibin A is a dimer of alpha and beta-A. Inhibin B is a dimer of alpha and beta-B. Interacts with TGFBR3L; this interaction regulates female fertility. In terms of processing, proteolytic processing yields a number of bioactive forms, consisting either solely of the mature alpha chain, of the most N-terminal propeptide linked through a disulfide bond to the mature alpha chain, or of the entire proprotein.

The protein localises to the secreted. Functionally, inhibins and activins inhibit and activate, respectively, the secretion of follitropin by the pituitary gland. Inhibins/activins are involved in regulating a number of diverse functions such as hypothalamic and pituitary hormone secretion, gonadal hormone secretion, germ cell development and maturation, erythroid differentiation, insulin secretion, nerve cell survival, embryonic axial development or bone growth, depending on their subunit composition. Inhibins appear to oppose the functions of activins. Its function is as follows. Inhibin A is a dimer of alpha/INHA and beta-A/INHBA that functions as a feedback regulator in the hypothalamic-pituitary-gonadal (HPG) axis. Inhibits the secretion of FSH from the anterior pituitary gland by acting on pituitary gonadotrope cells. Antagonizes activin A by binding to the proteoglycan, betaglycan, and forming a stable complex with and, thereby, sequestering type II activin receptors while excluding type I receptor. Inhibin B is a dimer of alpha and beta-B that plays a crucial role in the regulation of the reproductive system by inhibiting the secretion of follicle-stimulating hormone (FSH) from the anterior pituitary gland. Thereby, maintains reproductive homeostasis in both males and females. Acts as a more potent suppressor of FSH release than inhibin A. Functions as competitive receptor antagonist binding activin type II receptors with high affinity in the presence of the TGF-beta type III coreceptor/TGFBR3L. In Mus musculus (Mouse), this protein is Inhibin alpha chain (Inha).